A 72-amino-acid polypeptide reads, in one-letter code: LIGVKTEHGYLLDKYTGCKVWCVINNESCNGECKRRGGYYGYCYFWKLACFCQGARKSELWHYETNKCNGRM.

The signal sequence occupies residues 1 to 5; the sequence is LIGVK. In terms of domain architecture, LCN-type CS-alpha/beta spans 7 to 69; it reads EHGYLLDKYT…LWHYETNKCN (63 aa). Disulfide bonds link C18/C68, C22/C43, C29/C50, and C33/C52.

As to expression, expressed by the venom gland.

Its subcellular location is the secreted. In terms of biological role, antimicrobial peptide with weak activity against both Gram-positive and -negative bacteria. Its antibiotic activity is potentiated by other antibacterial peptides such as Meucin-49. The sequence is that of Antimicrobial peptide MeuNaTxbeta-4 from Mesobuthus eupeus (Lesser Asian scorpion).